A 400-amino-acid chain; its full sequence is Pyruvate dehydrogenase E1 component subunit beta-4, chloroplastic (400 aa).

The segment at 1–34 (MAAASSLHAAPRVGSSSSFSSSSSAGRRSASAAR) is disordered. The N-terminal 57 residues, 1–57 (MAAASSLHAAPRVGSSSSFSSSSSAGRRSASAARSVRVAAAAGSCAARRAGGRMVAR), are a transit peptide targeting the chloroplast. A compositionally biased stretch (low complexity) spans 9–34 (AAPRVGSSSSFSSSSSAGRRSASAAR). Glu136 serves as a coordination point for thiamine diphosphate. Positions 189, 237, 238, and 242 each coordinate K(+).

Tetramer of 2 alpha and 2 beta subunits. It depends on thiamine diphosphate as a cofactor.

The protein resides in the plastid. It is found in the chloroplast. It carries out the reaction N(6)-[(R)-lipoyl]-L-lysyl-[protein] + pyruvate + H(+) = N(6)-[(R)-S(8)-acetyldihydrolipoyl]-L-lysyl-[protein] + CO2. In terms of biological role, the pyruvate dehydrogenase complex catalyzes the overall conversion of pyruvate to acetyl-CoA and CO(2). It contains multiple copies of three enzymatic components: pyruvate dehydrogenase (E1), dihydrolipoamide acetyltransferase (E2) and lipoamide dehydrogenase (E3). This is Pyruvate dehydrogenase E1 component subunit beta-4, chloroplastic from Oryza sativa subsp. japonica (Rice).